Consider the following 340-residue polypeptide: Ketol-acid reductoisomerase (NADP(+)) (340 aa).

The KARI N-terminal Rossmann domain maps to 1-182 (MRVYYDRDCD…GGGRSGIIET (182 aa)). Residues 24-27 (YGSQ), Arg48, Ser51, Ser53, and 83-86 (DELQ) each bind NADP(+). Residue His108 is part of the active site. NADP(+) is bound at residue Gly134. The 147-residue stretch at 183-329 (NFRQECETDL…EKLRGMMPWI (147 aa)) folds into the KARI C-terminal knotted domain. The Mg(2+) site is built by Asp191, Glu195, Glu227, and Glu231. Ser252 is a substrate binding site.

The protein belongs to the ketol-acid reductoisomerase family. It depends on Mg(2+) as a cofactor.

The enzyme catalyses (2R)-2,3-dihydroxy-3-methylbutanoate + NADP(+) = (2S)-2-acetolactate + NADPH + H(+). It carries out the reaction (2R,3R)-2,3-dihydroxy-3-methylpentanoate + NADP(+) = (S)-2-ethyl-2-hydroxy-3-oxobutanoate + NADPH + H(+). It participates in amino-acid biosynthesis; L-isoleucine biosynthesis; L-isoleucine from 2-oxobutanoate: step 2/4. It functions in the pathway amino-acid biosynthesis; L-valine biosynthesis; L-valine from pyruvate: step 2/4. Its function is as follows. Involved in the biosynthesis of branched-chain amino acids (BCAA). Catalyzes an alkyl-migration followed by a ketol-acid reduction of (S)-2-acetolactate (S2AL) to yield (R)-2,3-dihydroxy-isovalerate. In the isomerase reaction, S2AL is rearranged via a Mg-dependent methyl migration to produce 3-hydroxy-3-methyl-2-ketobutyrate (HMKB). In the reductase reaction, this 2-ketoacid undergoes a metal-dependent reduction by NADPH to yield (R)-2,3-dihydroxy-isovalerate. The polypeptide is Ketol-acid reductoisomerase (NADP(+)) (Paracoccus denitrificans (strain Pd 1222)).